Here is a 1175-residue protein sequence, read N- to C-terminus: Double-stranded RNA-specific adenosine deaminase (1175 aa).

Asymmetric dimethylarginine occurs at positions 30 and 42. The Z-binding 1 domain occupies 135-201 (LSISQNPEQK…GKPPLWSLVP (67 aa)). The tract at residues 135 to 204 (LSISQNPEQK…PLWSLVPLSQ (70 aa)) is interaction with Z-DNA. The segment at 207–239 (TQPPRAVNSDKEVPRGEPDLDSEDGDPASDLEG) is disordered. Residues 214 to 224 (NSDKEVPRGEP) show a composition bias toward basic and acidic residues. Residues 225 to 235 (DLDSEDGDPAS) show a composition bias toward acidic residues. Phosphoserine occurs at positions 228 and 235. In terms of domain architecture, Z-binding 2 spans 243–307 (LLDMAEIKEK…ATPPIWYLTD (65 aa)). A disordered region spans residues 315–384 (MKRSTHSGPA…ARPGPVRLRP (70 aa)). Basic and acidic residues predominate over residues 357–376 (KRVENGQEPVTKYESRHEAR). Residue Lys368 forms a Glycyl lysine isopeptide (Lys-Gly) (interchain with G-Cter in SUMO); alternate linkage. Lys368 is covalently cross-linked (Glycyl lysine isopeptide (Lys-Gly) (interchain with G-Cter in SUMO1); alternate). Lys368 is covalently cross-linked (Glycyl lysine isopeptide (Lys-Gly) (interchain with G-Cter in SUMO2); alternate). Residue Ser431 is modified to Phosphoserine. Positions 453-521 (NPVSGLLEYA…AVKAMAILLR (69 aa)) constitute a DRBM 1 domain. Residues 524-561 (KAKDSGQPEELSNCPMEEDPEKPAESQPPSSSATSLFS) form a disordered region. The segment covering 550–561 (QPPSSSATSLFS) has biased composition (polar residues). 3 positions are modified to phosphoserine: Ser564, Ser579, and Ser586. The DRBM 2 domain maps to 564–632 (SPVTTLLECM…AEEAMKALQE (69 aa)). Residues 632–652 (EEAANSADDQSGGANTDSLDE) form a disordered region. The span at 638–648 (ADDQSGGANTD) shows a compositional bias: polar residues. The N-terminal extension of DRBM 3 and constituent of a bi-partite nuclear localization signal stretch occupies residues 662 to 671 (IGELVRYLNT). Residues 672-740 (NPVGGLLEYA…ADAALRVLIG (69 aa)) enclose the DRBM 3 domain. Residues 741-747 (ESEKAEQ) are C-terminal extension of DRBM 3 and constituent of a bi-partite nuclear localization signal. A Phosphothreonine modification is found at Thr754. Residues Ser760, Ser769, and Ser771 each carry the phosphoserine modification. Residue Lys821 forms a Glycyl lysine isopeptide (Lys-Gly) (interchain with G-Cter in SUMO2) linkage. Residues 832 to 1167 (SLGTGNRCVK…ISKPQEEKNF (336 aa)) form the A to I editase domain. His856 lines the Zn(2+) pocket. The Proton donor role is filled by Glu858. Residues Cys912 and Cys982 each coordinate Zn(2+).

In terms of assembly, homodimer. Homodimerization is essential for its catalytic activity. Isoform 5 can form heterodimers with ADARB1/ADAR2. Isoform 1 interacts with ILF2/NF45 and ILF3/NF90. Binding to ILF3/NF90 up-regulates ILF3-mediated gene expression. Isoform 1 and isoform 5 (via DRBM 3 domain) interact with TNPO1. Isoform 5 (via DRBM domains) interacts with XPO5. Isoform 1 and isoform 5 can interact with EIF2AK2/PKR and UPF1. Sumoylation reduces RNA-editing activity. In terms of tissue distribution, detected in brain.

The protein localises to the cytoplasm. Its subcellular location is the nucleus. It carries out the reaction adenosine in double-stranded RNA + H2O + H(+) = inosine in double-stranded RNA + NH4(+). Its function is as follows. Catalyzes the hydrolytic deamination of adenosine to inosine in double-stranded RNA (dsRNA) referred to as A-to-I RNA editing. This may affect gene expression and function in a number of ways that include mRNA translation by changing codons and hence the amino acid sequence of proteins; pre-mRNA splicing by altering splice site recognition sequences; RNA stability by changing sequences involved in nuclease recognition; genetic stability in the case of RNA virus genomes by changing sequences during viral RNA replication; and RNA structure-dependent activities such as microRNA production or targeting or protein-RNA interactions. Can edit both viral and cellular RNAs and can edit RNAs at multiple sites (hyper-editing) or at specific sites (site-specific editing). Its cellular RNA substrates include: bladder cancer-associated protein (BLCAP), neurotransmitter receptors for glutamate (GRIA2) and serotonin (HTR2C) and GABA receptor (GABRA3). Site-specific RNA editing of transcripts encoding these proteins results in amino acid substitutions which consequently alters their functional activities. Exhibits low-level editing at the GRIA2 Q/R site, but edits efficiently at the R/G site and HOTSPOT1. Does not affect polyomavirus replication but provides protection against virus-induced cytopathic effects. Essential for embryonic development and cell survival and plays a critical role in the maintenance of hematopoietic stem cells. This Rattus norvegicus (Rat) protein is Double-stranded RNA-specific adenosine deaminase (Adar).